Consider the following 199-residue polypeptide: Large ribosomal subunit protein bL25 (199 aa).

The protein belongs to the bacterial ribosomal protein bL25 family. CTC subfamily. As to quaternary structure, part of the 50S ribosomal subunit; part of the 5S rRNA/L5/L18/L25 subcomplex. Contacts the 5S rRNA. Binds to the 5S rRNA independently of L5 and L18.

This is one of the proteins that binds to the 5S RNA in the ribosome where it forms part of the central protuberance. The polypeptide is Large ribosomal subunit protein bL25 (Rickettsia akari (strain Hartford)).